The primary structure comprises 331 residues: Pyruvate dehydrogenase E1 component subunit beta (331 aa).

Glu60 provides a ligand contact to thiamine diphosphate. Positions 113, 161, 162, 164, and 166 each coordinate K(+).

In terms of assembly, heterodimer of an alpha and a beta chain. Thiamine diphosphate serves as cofactor.

The protein localises to the plastid. It is found in the chloroplast. It catalyses the reaction N(6)-[(R)-lipoyl]-L-lysyl-[protein] + pyruvate + H(+) = N(6)-[(R)-S(8)-acetyldihydrolipoyl]-L-lysyl-[protein] + CO2. The pyruvate dehydrogenase complex catalyzes the overall conversion of pyruvate to acetyl-CoA and CO(2). It contains multiple copies of three enzymatic components: pyruvate dehydrogenase (E1), dihydrolipoamide acetyltransferase (E2) and lipoamide dehydrogenase (E3). This is Pyruvate dehydrogenase E1 component subunit beta (pdhB) from Porphyra purpurea (Red seaweed).